Reading from the N-terminus, the 340-residue chain is UPF0324 membrane protein OB3406 (340 aa).

The next 9 helical transmembrane spans lie at 12–31 (SFYTGIGITLAIALVAGVLC), 36–58 (LDIMGQLVLAIMIGMIWGHTIGL), 94–116 (GLHAFLYAGLLLTVALVTVYSLA), 126–148 (SILTACGTAICGAAAIVAIAPLV), 155–177 (TAVSVAVIAVLGTMFTLIYTMMY), 215–237 (IAIVVKLTRVALLVPVAILIGIY), 257–276 (IPWFIFGFLAMSAVNTIGFL), 281–303 (VNLLISLAYLLLSMAMAGLGLNV), and 315–337 (VFFAGLLGTLILIGCGFGLIYVM).

It belongs to the UPF0324 family.

The protein resides in the cell membrane. In Oceanobacillus iheyensis (strain DSM 14371 / CIP 107618 / JCM 11309 / KCTC 3954 / HTE831), this protein is UPF0324 membrane protein OB3406.